The chain runs to 262 residues: Adenosylcobinamide-GDP ribazoletransferase (262 aa).

The next 5 membrane-spanning stretches (helical) occupy residues 41–63 (AFPFAGLAIALPSAAVAMALMAL), 68–85 (LFAAFVVVAIQALVTGAL), 115–134 (IGTYAAVALILSFGLRVSAF), 141–163 (FSPLGAAMAILGAACLSRAAMVW), and 201–221 (LLFYLAQVPALGVIAALVAFL).

Belongs to the CobS family. Associated with a large complex of proteins. Mg(2+) is required as a cofactor.

The protein resides in the cell inner membrane. The catalysed reaction is alpha-ribazole + adenosylcob(III)inamide-GDP = adenosylcob(III)alamin + GMP + H(+). It carries out the reaction alpha-ribazole 5'-phosphate + adenosylcob(III)inamide-GDP = adenosylcob(III)alamin 5'-phosphate + GMP + H(+). It participates in cofactor biosynthesis; adenosylcobalamin biosynthesis; adenosylcobalamin from cob(II)yrinate a,c-diamide: step 7/7. Functionally, joins adenosylcobinamide-GDP and alpha-ribazole to generate adenosylcobalamin (Ado-cobalamin). Also synthesizes adenosylcobalamin 5'-phosphate from adenosylcobinamide-GDP and alpha-ribazole 5'-phosphate. The polypeptide is Adenosylcobinamide-GDP ribazoletransferase (cobV) (Sinorhizobium sp).